The chain runs to 435 residues: MSTPKSDTCSPHQALARGMGFKNHHERLWWATFGPLLEKLLALCNYPVSLQYQHLSFIYHHLLPYLGPYPTVENGFAWKTAYSPDGTPAEVSLNFDGPKKTVRMDHVPISQWSGTPKDPFCQNVALELTKSLAGTLPDFTWDWFNHFVQTMFIPEPATDVVLAREPPNFRRMAMQSVNGCDLLTAGVRVKPVFNALWKSIETGIPHDKLLFDSIRNNTELFGAYLPALQVIEDYCQSDRAKEFQTRGCFLSFDATSIKDARLKVYLHGPQTAYMKVEDAFTLGGRLSNPNIQTGVKELRKLWYAVLNLPSDFPESEDLPATDDLYQGWLVNYELRPNNPVPEPKVYIPVAINNKDQDSIVQGLQEFFDRHESMDVRDYRDIFETLFLDAKNPTGIHHFITFSYKAHPYVTCYYKPHLEPVPAKELEESDVKGLSK.

L-tryptophan contacts are provided by residues 81–82 (AY) and Glu90. Positions 103, 190, 261, 263, 265, 346, and 413 each coordinate substrate.

The protein belongs to the tryptophan dimethylallyltransferase family.

Functionally, indole diterpene prenyltransferase; part of the ATM2 gene cluster that mediates the biosynthesis of aflatrem, a tremorgenic mycotoxin with acute neurotoxic effects. Synthesis of geranylgeranyl diphosphate (GGPP) by AtmG (a GGPP synthase) precedes condensation of GGPP with indole 3-glycerol phosphate, followed by epoxidation and cyclization by AtmM (a FAD-dependent monooxygenase) and AtmC (a prenyltransferase) to produce paspaline. AtmB is also essential for paspaline production, but its exact role has not been identified yet. AtmP, a cytochrome P450 monooxygenase, subsequently converts paspaline to 13-desoxypaxilline via PC-M6 by removal of the C-30 methyl group and oxidation at C-10. AtmQ, a cytochrome P450 monooxygenase, then catalyzes the oxidation of 13-desoxypaxilline, first at C-7 to produce paspalicine and then at C-13 to form paspalinine. Finally, AtmD prenylates paspalinine to form aflatrem. This chain is Indole diterpene prenyltransferase atmD, found in Aspergillus flavus.